A 529-amino-acid chain; its full sequence is VIN3-like protein 3 (529 aa).

The short motif at 97–104 (PKRQKRDL) is the Nuclear localization signal element. The PHD-type zinc-finger motif lies at 137 to 207 (RCSCCICFKY…CFNCVSCGKT (71 aa)). Positions 214–221 (LKKQLIIA) match the Nuclear localization signal motif. Positions 312-411 (GSMKIRIESV…FIVSTKTLQD (100 aa)) constitute a Fibronectin type-III domain. Residues 421-529 (MSNCNNANKM…AGVSLILLQD (109 aa)) form a VIN3-Interacting Domain (VID) region.

As to quaternary structure, interacts with VIN3.

Its subcellular location is the nucleus. Involved in both the vernalization and photoperiod pathways by regulating gene expression. In Arabidopsis thaliana (Mouse-ear cress), this protein is VIN3-like protein 3 (VIL3).